Reading from the N-terminus, the 211-residue chain is Small ribosomal subunit protein uS3 (211 aa).

The region spanning 38–106 (LRSFVKKTFH…DVELHIVEVK (69 aa)) is the KH type-2 domain.

The protein belongs to the universal ribosomal protein uS3 family. In terms of assembly, part of the 30S ribosomal subunit. Forms a tight complex with proteins S10 and S14.

In terms of biological role, binds the lower part of the 30S subunit head. Binds mRNA in the 70S ribosome, positioning it for translation. The chain is Small ribosomal subunit protein uS3 from Anaplasma marginale (strain Florida).